Reading from the N-terminus, the 944-residue chain is 2-oxoglutarate dehydrogenase E1 component (944 aa).

Residues 914 to 944 (RRRRSSPAEGDPTVHKKEQERIVSDSLTRKN) are disordered. Basic and acidic residues predominate over residues 925 to 936 (PTVHKKEQERIV).

The protein belongs to the alpha-ketoglutarate dehydrogenase family. As to quaternary structure, homodimer. Part of the 2-oxoglutarate dehydrogenase (OGDH) complex composed of E1 (2-oxoglutarate dehydrogenase), E2 (dihydrolipoamide succinyltransferase) and E3 (dihydrolipoamide dehydrogenase); the complex contains multiple copies of the three enzymatic components (E1, E2 and E3). Requires thiamine diphosphate as cofactor.

It catalyses the reaction N(6)-[(R)-lipoyl]-L-lysyl-[protein] + 2-oxoglutarate + H(+) = N(6)-[(R)-S(8)-succinyldihydrolipoyl]-L-lysyl-[protein] + CO2. In terms of biological role, E1 component of the 2-oxoglutarate dehydrogenase (OGDH) complex which catalyzes the decarboxylation of 2-oxoglutarate, the first step in the conversion of 2-oxoglutarate to succinyl-CoA and CO(2). This is 2-oxoglutarate dehydrogenase E1 component from Bacillus licheniformis (strain ATCC 14580 / DSM 13 / JCM 2505 / CCUG 7422 / NBRC 12200 / NCIMB 9375 / NCTC 10341 / NRRL NRS-1264 / Gibson 46).